The sequence spans 301 residues: Ribosomal protein L11 methyltransferase (301 aa).

Threonine 152, glycine 173, aspartate 195, and asparagine 236 together coordinate S-adenosyl-L-methionine.

Belongs to the methyltransferase superfamily. PrmA family.

Its subcellular location is the cytoplasm. The enzyme catalyses L-lysyl-[protein] + 3 S-adenosyl-L-methionine = N(6),N(6),N(6)-trimethyl-L-lysyl-[protein] + 3 S-adenosyl-L-homocysteine + 3 H(+). In terms of biological role, methylates ribosomal protein L11. The protein is Ribosomal protein L11 methyltransferase of Dictyoglomus thermophilum (strain ATCC 35947 / DSM 3960 / H-6-12).